We begin with the raw amino-acid sequence, 316 residues long: Protoheme IX farnesyltransferase (316 aa).

Transmembrane regions (helical) follow at residues 32-52, 53-73, 98-118, 120-140, 153-173, 180-200, 226-246, 251-271, and 280-300; these read VMSLVIFTALTGVLIAPTHVN, PIIGFASLLAIAAGAGASGAL, VARESALAFGMVLALLSVITL, FVANWAAAALLAFTIFFYVVI, IVIGGAAGAFPPIVAYLAVAG, LALFAIIFVWTPPHFWALALV, ILLYTLLLAPIGMTPYFIGFA, GLLSFGLGGVMILHAVRVYLA, and VAMRMFGFSILYLFLLFAAIV.

Belongs to the UbiA prenyltransferase family. Protoheme IX farnesyltransferase subfamily.

The protein resides in the cell inner membrane. The enzyme catalyses heme b + (2E,6E)-farnesyl diphosphate + H2O = Fe(II)-heme o + diphosphate. It functions in the pathway porphyrin-containing compound metabolism; heme O biosynthesis; heme O from protoheme: step 1/1. Converts heme B (protoheme IX) to heme O by substitution of the vinyl group on carbon 2 of heme B porphyrin ring with a hydroxyethyl farnesyl side group. The protein is Protoheme IX farnesyltransferase of Methylocella silvestris (strain DSM 15510 / CIP 108128 / LMG 27833 / NCIMB 13906 / BL2).